The sequence spans 116 residues: Large ribosomal subunit protein bL19 (116 aa).

The protein belongs to the bacterial ribosomal protein bL19 family.

This protein is located at the 30S-50S ribosomal subunit interface and may play a role in the structure and function of the aminoacyl-tRNA binding site. The protein is Large ribosomal subunit protein bL19 of Pseudomonas savastanoi pv. phaseolicola (strain 1448A / Race 6) (Pseudomonas syringae pv. phaseolicola (strain 1448A / Race 6)).